Here is a 315-residue protein sequence, read N- to C-terminus: Transaldolase (315 aa).

Catalysis depends on K125, which acts as the Schiff-base intermediate with substrate.

It belongs to the transaldolase family. Type 1 subfamily. In terms of assembly, homodimer.

The protein resides in the cytoplasm. The enzyme catalyses D-sedoheptulose 7-phosphate + D-glyceraldehyde 3-phosphate = D-erythrose 4-phosphate + beta-D-fructose 6-phosphate. The protein operates within carbohydrate degradation; pentose phosphate pathway; D-glyceraldehyde 3-phosphate and beta-D-fructose 6-phosphate from D-ribose 5-phosphate and D-xylulose 5-phosphate (non-oxidative stage): step 2/3. Its function is as follows. Transaldolase is important for the balance of metabolites in the pentose-phosphate pathway. This is Transaldolase from Paracidovorax citrulli (strain AAC00-1) (Acidovorax citrulli).